A 540-amino-acid polypeptide reads, in one-letter code: UDP-N-acetylmuramyl-tripeptide synthetase (540 aa).

Ser33 is a binding site for UDP-N-acetyl-alpha-D-muramoyl-L-alanyl-D-glutamate. 114 to 120 (GTEGKSS) is an ATP binding site. Residues 158 to 159 (TT), Ser185, and Arg195 contribute to the UDP-N-acetyl-alpha-D-muramoyl-L-alanyl-D-glutamate site. At Lys227 the chain carries N6-carboxylysine.

It belongs to the MurCDEF family. MurE subfamily. In terms of processing, carboxylation is probably crucial for Mg(2+) binding and, consequently, for the gamma-phosphate positioning of ATP.

Its subcellular location is the cytoplasm. Its pathway is cell wall biogenesis; peptidoglycan biosynthesis. Catalyzes the addition of an amino acid to the nucleotide precursor UDP-N-acetylmuramoyl-L-alanyl-D-glutamate (UMAG) in the biosynthesis of bacterial cell-wall peptidoglycan. This is UDP-N-acetylmuramyl-tripeptide synthetase from Treponema pallidum (strain Nichols).